We begin with the raw amino-acid sequence, 229 residues long: Large ribosomal RNA subunit accumulation protein YCED homolog 2, chloroplastic (229 aa).

Residues 1–42 (MDVRCLISPNLLNSKIKVSGNTHHLPFSSLSKKHQASSPIQA) constitute a chloroplast transit peptide.

Belongs to the DUF177 domain family.

It localises to the plastid. Its subcellular location is the chloroplast. May play a role in synthesis, processing and/or stability of 23S rRNA. The protein is Large ribosomal RNA subunit accumulation protein YCED homolog 2, chloroplastic of Arabidopsis thaliana (Mouse-ear cress).